The sequence spans 412 residues: Probable tRNA pseudouridine synthase D (412 aa).

Aspartate 97 serves as the catalytic Nucleophile. In terms of domain architecture, TRUD spans 167–370 (ALPNYYGYQR…YGSYRRARLQ (204 aa)).

The protein belongs to the pseudouridine synthase TruD family.

The enzyme catalyses uridine(13) in tRNA = pseudouridine(13) in tRNA. Could be responsible for synthesis of pseudouridine from uracil-13 in transfer RNAs. The polypeptide is Probable tRNA pseudouridine synthase D (Pyrobaculum neutrophilum (strain DSM 2338 / JCM 9278 / NBRC 100436 / V24Sta) (Thermoproteus neutrophilus)).